Here is a 452-residue protein sequence, read N- to C-terminus: UDP-N-acetylmuramate--L-alanine ligase (452 aa).

119–125 (GAHGKTS) serves as a coordination point for ATP.

It belongs to the MurCDEF family.

The protein resides in the cytoplasm. It carries out the reaction UDP-N-acetyl-alpha-D-muramate + L-alanine + ATP = UDP-N-acetyl-alpha-D-muramoyl-L-alanine + ADP + phosphate + H(+). It participates in cell wall biogenesis; peptidoglycan biosynthesis. Its function is as follows. Cell wall formation. The polypeptide is UDP-N-acetylmuramate--L-alanine ligase (Streptococcus mutans serotype c (strain ATCC 700610 / UA159)).